The primary structure comprises 178 residues: Large ribosomal subunit protein uL6 (178 aa).

The protein belongs to the universal ribosomal protein uL6 family. In terms of assembly, part of the 50S ribosomal subunit.

Functionally, this protein binds to the 23S rRNA, and is important in its secondary structure. It is located near the subunit interface in the base of the L7/L12 stalk, and near the tRNA binding site of the peptidyltransferase center. The sequence is that of Large ribosomal subunit protein uL6 from Campylobacter fetus subsp. fetus (strain 82-40).